Reading from the N-terminus, the 150-residue chain is Globin (150 aa).

Positions 11 to 150 (PLSAAEKTKI…MICILLRSAY (140 aa)) constitute a Globin domain. 2 residues coordinate heme b: His-74 and His-106.

It belongs to the globin family. In terms of assembly, monomer.

This is Globin from Lampetra fluviatilis (European river lamprey).